Reading from the N-terminus, the 355-residue chain is CRAL-TRIO domain-containing protein C365.01 (355 aa).

In terms of domain architecture, CRAL-TRIO spans 93–260; that stretch reads ENGLNQNFVK…SMHGQFDETK (168 aa).

The polypeptide is CRAL-TRIO domain-containing protein C365.01 (Schizosaccharomyces pombe (strain 972 / ATCC 24843) (Fission yeast)).